Consider the following 394-residue polypeptide: Elongation factor Tu (394 aa).

The 195-residue stretch at 10-204 (KPHVNVGTIG…AMDDYIPAPE (195 aa)) folds into the tr-type G domain. Positions 19–26 (GHVDHGKT) are G1. 19-26 (GHVDHGKT) is a binding site for GTP. Thr26 contacts Mg(2+). Positions 60 to 64 (GITIN) are G2. The interval 81–84 (DCPG) is G3. Residues 81-85 (DCPGH) and 136-139 (NKCD) contribute to the GTP site. The interval 136 to 139 (NKCD) is G4. The G5 stretch occupies residues 174 to 176 (SAL).

Belongs to the TRAFAC class translation factor GTPase superfamily. Classic translation factor GTPase family. EF-Tu/EF-1A subfamily. In terms of assembly, monomer.

It localises to the cytoplasm. The catalysed reaction is GTP + H2O = GDP + phosphate + H(+). Functionally, GTP hydrolase that promotes the GTP-dependent binding of aminoacyl-tRNA to the A-site of ribosomes during protein biosynthesis. This chain is Elongation factor Tu, found in Francisella tularensis subsp. holarctica (strain FTNF002-00 / FTA).